Reading from the N-terminus, the 445-residue chain is Probable D-serine dehydratase (445 aa).

The residue at position 111 (Lys-111) is an N6-(pyridoxal phosphate)lysine.

It belongs to the serine/threonine dehydratase family. DsdA subfamily. Requires pyridoxal 5'-phosphate as cofactor.

It catalyses the reaction D-serine = pyruvate + NH4(+). The polypeptide is Probable D-serine dehydratase (Burkholderia pseudomallei (strain K96243)).